The sequence spans 485 residues: MTPNRRSTDSYNMLGASFDFDPDFSLLSNKTHKNKNPKPPVKLLPYRHGSNTTSSDSDSYIFNSGSGSSDAETPAPVAPIFISLEDVLLNGQLIDFAIDPSGVKFLEANYPLDSEDQIRKAVFEKFTESTTLFVGLCHSRNGNFIVQKLVELATPAEQRELLRQMIDGGLLAMCKDKFACRVVQLALQKFDHSNVFQLIQELSTFDLAAMCTDQISIHVIQRVVKQLPVDMWTFFVHFLSSGDSLMAVCQDKYGCRLVQQVIDRLAENPKLPCFKFRIQLLHSLMTCIVRNCYRLSSNEFANYVIQYVIKSSGIMEMYRDTIIDKCLLRNLLSMSQDKYASHVIEGAFLFAPPALLHEMMEEIFSGYVKDVESNRDALDILLFHQYGNYVVQQMISICTAALIGKEERELPPAILLLYSGWYEKMKQRVLQHASRLERFSSGKKIIDSVMRHGVPTAAAVNAQAAPSLMELTAQFDAMFPSFLAR.

Positions 29 to 72 (NKTHKNKNPKPPVKLLPYRHGSNTTSSDSDSYIFNSGSGSSDAE) are disordered. The span at 49–71 (GSNTTSSDSDSYIFNSGSGSSDA) shows a compositional bias: polar residues. 8 Pumilio repeats span residues 86–124 (DVLL…AVFE), 128–163 (ESTT…ELLR), 164–200 (QMID…QLIQ), 201–236 (ELST…TFFV), 237–279 (HFLS…FRIQ), 287–324 (CIVR…TIID), 326–361 (CLLR…EMME), and 370–411 (DVES…RELP). The tract at residues 439 to 454 (FSSGKKIIDSVMRHGV) is RNA-binding.

In terms of biological role, RNA-binding protein that binds to the consensus sequence 5'-CUCUGUAUCUUGU-3' in mRNA 3'-UTRs and modulates mRNA expression and stability. Functions redundantly with puf-5 and puf-6 in oocyte formation and organization, early embryonic cell divisions, and repression of expression of glp-1 and other maternal mRNAs in late oogenesis. The protein is Pumilio domain-containing protein 7 of Caenorhabditis elegans.